Here is a 1505-residue protein sequence, read N- to C-terminus: Probable serine/threonine-protein kinase DDB_G0280133 (1505 aa).

PAS domains follow at residues N2–G72, R108–G178, and D215–H284. 2 disordered regions span residues D282–S348 and R398–Y533. Composition is skewed to low complexity over residues Q289–T314 and S328–T344. Basic and acidic residues-rich tracts occupy residues R398–N407 and E415–E430. The span at H431 to D443 shows a compositional bias: basic residues. The segment covering N448–S468 has biased composition (low complexity). Residues S479–S489 are compositionally biased toward basic residues. Positions S515–S532 are enriched in low complexity. One can recognise a Protein kinase domain in the interval Y542–L805. Residues L548 to V556 and K571 contribute to the ATP site. D684 functions as the Proton acceptor in the catalytic mechanism. Residues N855–N960 show a composition bias toward low complexity. Disordered stretches follow at residues N855 to Q1048, Q1072 to Q1091, and Q1181 to N1358. Positions N903 to N939 form a coiled coil. Over residues L961 to Y974 the composition is skewed to polar residues. Low complexity-rich tracts occupy residues Q975–H1013 and Q1022–Q1048. Over residues Q1072–N1082 the composition is skewed to polar residues. Positions I1125–D1189 form a coiled coil. The segment covering S1202–N1271 has biased composition (basic and acidic residues). Over residues R1272–N1282 the composition is skewed to low complexity. 2 stretches are compositionally biased toward basic and acidic residues: residues N1283–K1301 and N1313–F1326. Residues S1331–R1347 show a composition bias toward polar residues. Positions F1399 to I1463 constitute an FHA domain.

It belongs to the protein kinase superfamily. CAMK Ser/Thr protein kinase family. SNF1 subfamily.

The catalysed reaction is L-seryl-[protein] + ATP = O-phospho-L-seryl-[protein] + ADP + H(+). It catalyses the reaction L-threonyl-[protein] + ATP = O-phospho-L-threonyl-[protein] + ADP + H(+). This is Probable serine/threonine-protein kinase DDB_G0280133 from Dictyostelium discoideum (Social amoeba).